Reading from the N-terminus, the 156-residue chain is uncharacterized protein (156 aa).

The span at Met-1–Ala-12 shows a compositional bias: pro residues. Disordered regions lie at residues Met-1–Ala-89 and Pro-129–Asp-156. Over residues Ala-49–Thr-67 the composition is skewed to basic and acidic residues.

This is an uncharacterized protein from Homo sapiens (Human).